The chain runs to 233 residues: Ribose-5-phosphate isomerase A (233 aa).

Residues 31 to 34 (SGST), 87 to 90 (DGAD), and 100 to 103 (KGGG) contribute to the substrate site. The active-site Proton acceptor is Glu109. Lys127 lines the substrate pocket.

This sequence belongs to the ribose 5-phosphate isomerase family. As to quaternary structure, homodimer.

The catalysed reaction is aldehydo-D-ribose 5-phosphate = D-ribulose 5-phosphate. It participates in carbohydrate degradation; pentose phosphate pathway; D-ribose 5-phosphate from D-ribulose 5-phosphate (non-oxidative stage): step 1/1. In terms of biological role, catalyzes the reversible conversion of ribose-5-phosphate to ribulose 5-phosphate. This chain is Ribose-5-phosphate isomerase A, found in Chlamydia felis (strain Fe/C-56) (Chlamydophila felis).